The primary structure comprises 94 residues: Co-chaperonin GroES (94 aa).

This sequence belongs to the GroES chaperonin family. Heptamer of 7 subunits arranged in a ring. Interacts with the chaperonin GroEL.

It is found in the cytoplasm. In terms of biological role, together with the chaperonin GroEL, plays an essential role in assisting protein folding. The GroEL-GroES system forms a nano-cage that allows encapsulation of the non-native substrate proteins and provides a physical environment optimized to promote and accelerate protein folding. GroES binds to the apical surface of the GroEL ring, thereby capping the opening of the GroEL channel. The chain is Co-chaperonin GroES from Clostridium kluyveri (strain NBRC 12016).